Reading from the N-terminus, the 412-residue chain is MNTGTYLMPTAAYIHIPFCRQRCFYCDFPIAVTGFQSLTLDGWVGEYVEAVCREIAGQQHQGQPLQTVFFGGGTPSLLPITGLEKILLAVDQYLGIAPDAEISIEIDPGTFDQVQLQGYKNLGINRFSLGVQAFQDNLLALCGRHHRRRDIDQALTAIAKENIENWSLDLITGLPEQTAADWHSSLTLALAAGPKHISCYDLVLEPQTVFDKWEQRGKLAVPPPERSADFYRHGQEVLTQAGFHHYEISNYGRPGHQCRHNQIYWRNLPYYGLGMGATSYIDGKRFGRPRTRNGYYQWLESWLNQGCPIPGERVSPLENLLESLMLGLRLTAGVTWAQLPSVNQTEKAKILATLTSFGDRRWLEFYGEDNQMLAPNQTTTETVQRFCFTDPEGILYSNQILSALFAALEEDF.

In terms of domain architecture, Radical SAM core spans Gly4–Ala241. An S-adenosyl-L-methionine-binding site is contributed by Tyr13. [2Fe-2S] cluster contacts are provided by Cys19, Cys23, and Cys26. S-adenosyl-L-methionine-binding positions include Gly72, Gly73 to Thr74, Glu105, Gln132, Arg144, and Asp169.

Belongs to the anaerobic coproporphyrinogen-III oxidase family. HemW subfamily. Requires [4Fe-4S] cluster as cofactor.

The protein resides in the cytoplasm. Functionally, probably acts as a heme chaperone, transferring heme to an unknown acceptor. Binds one molecule of heme per monomer, possibly covalently. Binds 1 [2Fe-2S] cluster. Although this protein has sequence motifs typically found in proteins binding the [4Fe-4S]-AdoMet radical-SAM cluster and S-adenosylmethionine, spectroscopic evidence suggests that a [2Fe-2S] cluster is present; S-adenosylmethionine was not detected. Has no detectable coproporphyrinogen-III oxidase activity. The protein is Heme chaperone HemW of Synechocystis sp. (strain ATCC 27184 / PCC 6803 / Kazusa).